The primary structure comprises 2327 residues: Acetyl-CoA carboxylase 2 (2327 aa).

The interval 1–62 is disordered; sequence MTSTHVATLG…NGGVSDSKKL (62 aa). Residues 134–641 enclose the Biotin carboxylation domain; the sequence is PIHSVLVANN…HTGWLDTRIA (508 aa). An ATP-grasp domain is found at 287-481; sequence ECCLDSIPDE…AAQVAVGMGI (195 aa). 313–370 contacts ATP; it reads CQVVGYPAMIKASWGGGGKGIRKVHNDDEVRTLFKQVQGEVPGSPIFIMRLAAQSRHL. Positions 436, 450, and 452 each coordinate Mg(2+). The Mn(2+) site is built by Glu436, Glu450, and Asn452. Arg454 is a catalytic residue. The 75-residue stretch at 768–842 folds into the Biotinyl-binding domain; the sequence is LQNDHDPSKL…QAGDLIARLD (75 aa). Lys809 carries the N6-biotinyllysine modification. Positions 1568-1909 constitute a CoA carboxyltransferase N-terminal domain; it reads PYQPLSVIDL…YIGGPLPVTT (342 aa). A carboxyltransferase region spans residues 1568–2227; sequence PYQPLSVIDL…EDVLAKEIRA (660 aa). Residues Arg1818, Lys2119, and Arg2121 each coordinate CoA. In terms of domain architecture, CoA carboxyltransferase C-terminal spans 1913–2227; sequence PPDRPVAYIP…EDVLAKEIRA (315 aa).

As to quaternary structure, homodimer. Biotin serves as cofactor. Requires Mg(2+) as cofactor. It depends on Mn(2+) as a cofactor.

The protein localises to the cytoplasm. Its subcellular location is the cytosol. It catalyses the reaction hydrogencarbonate + acetyl-CoA + ATP = malonyl-CoA + ADP + phosphate + H(+). It carries out the reaction N(6)-biotinyl-L-lysyl-[protein] + hydrogencarbonate + ATP = N(6)-carboxybiotinyl-L-lysyl-[protein] + ADP + phosphate + H(+). It participates in lipid metabolism; malonyl-CoA biosynthesis; malonyl-CoA from acetyl-CoA: step 1/1. Its function is as follows. Multifunctional enzyme that catalyzes the carboxylation of acetyl-CoA, forming malonyl-CoA, which is used in the plastid for fatty acid synthesis and in the cytosol in various biosynthetic pathways including fatty acid elongation. This Oryza sativa subsp. japonica (Rice) protein is Acetyl-CoA carboxylase 2 (ACC2).